Here is a 196-residue protein sequence, read N- to C-terminus: MADGQMPFSCHYPSRLRRDPFRDSPLSSRLLDDGFGMDPFPDDLTASWPDWALPRLSSAWPGTLRSGMVPRGPTATARFGVPAEGRTPPPFPGEPWKVCVNVHSFKPEELMVKTKDGYVEVSGKHEEKQQEGGIVSKNFTKKIQLPAEVDPVTVFASLSPEGLLIIEAPQVPPYSTFGESSFNNELPQDSQEVTCT.

Ser24 and Ser57 each carry phosphoserine. Thr63 bears the Phosphothreonine; by PKC; in vitro mark. Residues Arg71 and Arg78 each carry the asymmetric dimethylarginine modification. The sHSP domain maps to 74–185 (TATARFGVPA…TFGESSFNNE (112 aa)). Residues 176 to 196 (TFGESSFNNELPQDSQEVTCT) form a disordered region. Positions 177–196 (FGESSFNNELPQDSQEVTCT) are enriched in polar residues.

Belongs to the small heat shock protein (HSP20) family. In terms of assembly, monomer. Forms a ternary complex with BAG3 and HSPA1A. Component of the chaperone-assisted selective autophagy (CASA) complex consisting of BAG3, HSPA8/HSC70, HSPB8 and STUB1/CHIP. Interacts with HSPB1. Interacts with DNAJB6. Interacts with BAG3. As to expression, predominantly expressed in skeletal muscle and heart.

Its subcellular location is the cytoplasm. The protein resides in the nucleus. In terms of biological role, involved in the chaperone-assisted selective autophagy (CASA), a crucial process for protein quality control, particularly in mechanical strained cells and tissues such as muscle. Displays temperature-dependent chaperone activity. This chain is Heat shock protein beta-8 (HSPB8), found in Homo sapiens (Human).